The sequence spans 1008 residues: Chitin synthase C (1008 aa).

The segment at 1–160 (MIYEMMVMKR…GGRTIDPNNR (160 aa)) is disordered. A compositionally biased stretch (low complexity) spans 10-19 (RSANSRAQNN). Over residues 34-45 (ESPSRPVSSLGN) the composition is skewed to polar residues. N312 carries an N-linked (GlcNAc...) asparagine glycan. Transmembrane regions (helical) follow at residues 642–662 (FMQL…FYFI), 682–702 (IFVI…IISM), 717–737 (IIVY…LVVI), 755–775 (LFVN…YASF), and 787–807 (SAAY…YAFC). An N-linked (GlcNAc...) asparagine glycan is attached at N833. The next 2 helical transmembrane spans lie at 887–907 (MVSI…EVYG) and 910–930 (AGGT…LALI). A glycan (N-linked (GlcNAc...) asparagine) is linked at N961.

Belongs to the chitin synthase family. Class II subfamily.

Its subcellular location is the cell membrane. It carries out the reaction [(1-&gt;4)-N-acetyl-beta-D-glucosaminyl](n) + UDP-N-acetyl-alpha-D-glucosamine = [(1-&gt;4)-N-acetyl-beta-D-glucosaminyl](n+1) + UDP + H(+). Its function is as follows. Polymerizes chitin, a structural polymer of the cell wall and septum, by transferring the sugar moiety of UDP-GlcNAc to the non-reducing end of the growing chitin polymer. Involved in cell wall integrity and mycelial morphology. Plays an important role in septal growth or maintenance. Acts as a positive regulator of conidiation, cellular responses to oxidative stresses, and the production of malic acid. Negatively regulates the citric acid production. This chain is Chitin synthase C, found in Aspergillus niger (strain ATCC MYA-4892 / CBS 513.88 / FGSC A1513).